A 364-amino-acid polypeptide reads, in one-letter code: Paraneoplastic antigen Ma2 homolog (364 aa).

An N-acetylalanine modification is found at A2. Acidic residues predominate over residues 335-353 (EEEEASFENESIEEPEEGD). A disordered region spans residues 335 to 364 (EEEEASFENESIEEPEEGDGYGGWNHEGDD). Residues 354–364 (GYGGWNHEGDD) are compositionally biased toward gly residues.

Belongs to the PNMA family.

The protein localises to the nucleus. It localises to the nucleolus. In Macaca fascicularis (Crab-eating macaque), this protein is Paraneoplastic antigen Ma2 homolog (PNMA2).